Consider the following 164-residue polypeptide: 3-isopropylmalate dehydratase small subunit 1 (164 aa).

Belongs to the LeuD family. LeuD type 2 subfamily. In terms of assembly, heterodimer of LeuC and LeuD.

It carries out the reaction (2R,3S)-3-isopropylmalate = (2S)-2-isopropylmalate. It participates in amino-acid biosynthesis; L-leucine biosynthesis; L-leucine from 3-methyl-2-oxobutanoate: step 2/4. In terms of biological role, catalyzes the isomerization between 2-isopropylmalate and 3-isopropylmalate, via the formation of 2-isopropylmaleate. This chain is 3-isopropylmalate dehydratase small subunit 1 (leuD1), found in Pyrococcus abyssi (strain GE5 / Orsay).